The chain runs to 450 residues: Protein tweety homolog 1 (450 aa).

Over 1 to 43 (MGAPPGYRPSAWVHLLHQLPRADFQLRPVPSAFAPQEREYQQA) the chain is Extracellular. A helical transmembrane segment spans residues 44–64 (LLLVAALAGLGLGLSLIFIAV). Over 65–88 (YLIRFCCCRPPEPPGAKSPPPGGG) the chain is Cytoplasmic. A helical membrane pass occupies residues 89 to 109 (CVTWNCIAALLVGCAGIGVGF). The Extracellular segment spans residues 110-214 (YGNSETSDGV…DVSFVEEYRW (105 aa)). N-linked (GlcNAc...) asparagine glycosylation is present at N130. A helical membrane pass occupies residues 215–235 (LAYVLLLLLELLVCLFTLLGL). At 236–240 (ARQSK) the chain is on the cytoplasmic side. Residues 241-261 (WLVIVMTVMSLLVLVLSWGSM) traverse the membrane as a helical segment. Over 262–390 (GLEAATAVGL…LRGLCEDTLE (129 aa)) the chain is Extracellular. Intrachain disulfides connect C275-C385 and C303-C370. 2 N-linked (GlcNAc...) asparagine glycosylation sites follow: N284 and N355. Residues 391 to 411 (GLLFLLLFSLLSAGALATVLC) traverse the membrane as a helical segment. Residues 412–450 (SLPRAWALFPPSDDYEDTDDDDPFNPQESKRFVQWQSSI) lie on the Cytoplasmic side of the membrane. Residues 427–450 (EDTDDDDPFNPQESKRFVQWQSSI) are disordered. S440 bears the Phosphoserine mark.

This sequence belongs to the tweety family. As to quaternary structure, homotetramer; disulfide-linked. Homodimer. In terms of processing, N-glycosylated. Contains high-mannose, hybrid and complex oligosaccharides.

It is found in the cell membrane. The enzyme catalyses chloride(in) = chloride(out). It catalyses the reaction L-glutamate(out) = L-glutamate(in). Its function is as follows. Calcium-independent, swelling-dependent volume-regulated anion channel (VRAC-swell) which plays a pivotal role in the process of regulatory volume decrease (RVD) in the brain through the efflux of anions like chloride and organic osmolytes like glutamate. The polypeptide is Protein tweety homolog 1 (TTYH1) (Bos taurus (Bovine)).